Here is a 185-residue protein sequence, read N- to C-terminus: Ribosome-recycling factor (185 aa).

This sequence belongs to the RRF family.

The protein localises to the cytoplasm. In terms of biological role, responsible for the release of ribosomes from messenger RNA at the termination of protein biosynthesis. May increase the efficiency of translation by recycling ribosomes from one round of translation to another. The protein is Ribosome-recycling factor of Xylella fastidiosa (strain Temecula1 / ATCC 700964).